Consider the following 143-residue polypeptide: Actin-depolymerizing factor 2 (143 aa).

Positions 5–139 (ASGMAVHDDC…GLDVFRSRAG (135 aa)) constitute an ADF-H domain.

The protein belongs to the actin-binding proteins ADF family.

Functionally, actin-depolymerizing protein. Severs actin filaments (F-actin) and binds to actin monomers. The sequence is that of Actin-depolymerizing factor 2 (ADF2) from Petunia hybrida (Petunia).